We begin with the raw amino-acid sequence, 607 residues long: Zinc metalloproteinase-disintegrin-like atrase-A (607 aa).

A signal peptide spans 1 to 20; it reads MIQALLVIICLAVFPHQGSS. Residues 21–196 constitute a propeptide that is removed on maturation; sequence IILESGNVND…KTSQLTNTPE (176 aa). The 194-residue stretch at 205–398 folds into the Peptidase M12B domain; the sequence is KYIEFYLVVD…ERPQCILNKP (194 aa). Glutamate 208 is a binding site for Ca(2+). N-linked (GlcNAc...) asparagine glycosylation is found at asparagine 220 and asparagine 270. Residue aspartate 290 coordinates Ca(2+). N-linked (GlcNAc...) asparagine glycosylation is present at asparagine 301. Cystine bridges form between cysteine 314–cysteine 393, cysteine 353–cysteine 377, and cysteine 355–cysteine 360. Residues histidine 338, histidine 342, and histidine 348 each coordinate Zn(2+). Residues cysteine 393, asparagine 396, asparagine 411, phenylalanine 413, glutamate 415, glutamate 418, and aspartate 421 each contribute to the Ca(2+) site. One can recognise a Disintegrin domain in the interval 406 to 492; the sequence is RPVCGNNFVE…ECPTDSLQRN (87 aa). 14 disulfides stabilise this stretch: cysteine 409/cysteine 438, cysteine 420/cysteine 433, cysteine 422/cysteine 428, cysteine 432/cysteine 455, cysteine 446/cysteine 452, cysteine 451/cysteine 477, cysteine 464/cysteine 484, cysteine 471/cysteine 503, cysteine 496/cysteine 508, cysteine 515/cysteine 565, cysteine 530/cysteine 573, cysteine 543/cysteine 553, cysteine 560/cysteine 599, and cysteine 593/cysteine 604. N-linked (GlcNAc...) asparagine glycosylation occurs at asparagine 434. Residues 470–472 carry the D/ECD-tripeptide motif; it reads DCD. Residues aspartate 472, leucine 473, glutamate 475, aspartate 487, and serine 488 each coordinate Ca(2+). The N-linked (GlcNAc...) asparagine glycan is linked to asparagine 522.

It belongs to the venom metalloproteinase (M12B) family. P-III subfamily. P-IIIa sub-subfamily. As to quaternary structure, monomer. It depends on Zn(2+) as a cofactor. In terms of tissue distribution, expressed by the venom gland.

The protein resides in the secreted. Snake venom zinc metalloproteinase that inhibits platelet aggregation by cleaving platelet glycoprotein Ib alpha (GP1BA) at Glu-298/Asp-299, and abolishes binding of von Willebrand factor (VWF) to GPIBA. This chain is Zinc metalloproteinase-disintegrin-like atrase-A, found in Naja atra (Chinese cobra).